Consider the following 138-residue polypeptide: Microneme antigen L2 (138 aa).

2 consecutive PAN domains span residues 9-78 and 82-138; these read CFAH…PRSC and CSDA…SKRA. 6 disulfides stabilise this stretch: Cys9–Cys78, Cys34–Cys56, Cys38–Cys44, Cys82–Cys86, Cys107–Cys127, and Cys111–Cys117. Ser18 serves as a coordination point for a carbohydrate. Positions 59, 66, and 71 each coordinate a carbohydrate.

As to quaternary structure, homodimer or heterodimer. Contains six disulfide bonds.

It localises to the cytoplasmic vesicle. The protein localises to the secretory vesicle. Its subcellular location is the microneme. Its function is as follows. Galactose-binding lectin. Plays a role in adhesion to the host cell. Has a potential role in invasion of host cells. The chain is Microneme antigen L2 from Sarcocystis muris.